The primary structure comprises 543 residues: Cytochrome P450 52A1 (543 aa).

The Lumenal segment spans residues 1–28 (MSSSPSIAQEFLATITPYVEYCQENYTK). Residues 29–48 (WYYFIPLVILSLNLISMLHT) form a helical membrane-spanning segment. Residues 49-543 (KYLERKFKAK…GAEVQMYLIL (495 aa)) are Cytoplasmic-facing. C487 provides a ligand contact to heme.

It belongs to the cytochrome P450 family. Heme is required as a cofactor.

The protein resides in the endoplasmic reticulum membrane. Together with an NADPH cytochrome P450 the enzyme system catalyzes the terminal hydroxylation as the first step in the assimilation of alkanes and fatty acids. This chain is Cytochrome P450 52A1 (CYP52A1), found in Candida tropicalis (Yeast).